A 267-amino-acid chain; its full sequence is MKAAVLTLAVLFLTGSQARHFWQQDEPPQTPWDRVKDLATVYVDVLKDSGRDYVSQFEGSALGKQLNLKLLDNWDSMTSTFSKLREQLGPVTQEFWDNLEKETEGLRQEMSKDLEEVKAKVQPYLDDFQKKWQEEMELYRQKVEPLRAELQEGARQKLHELHEKLSPLGEEMRDRARAHVDALRTHLAPYTDELRQRLAARLEALKENGGARLAEYHAKASEHLSTLSEKAKPALEDLRQGLLPVLESFKVSFLSALEEYTKKLNTQ.

The N-terminal stretch at 1–18 (MKAAVLTLAVLFLTGSQA) is a signal peptide. A run of 2 repeats spans residues 68-89 (LKLLDNWDSMTSTFSKLREQLG) and 90-111 (PVTQEFWDNLEKETEGLRQEMS). Residues 68–267 (LKLLDNWDSM…EEYTKKLNTQ (200 aa)) are 10 X approximate tandem repeats. Met-110 carries the methionine sulfoxide modification. A 3; half-length repeat occupies 112–122 (KDLEEVKAKVQ). 5 tandem repeats follow at residues 123-144 (PYLDDFQKKWQEEMELYRQKVE), 145-166 (PLRAELQEGARQKLHELHEKLS), 167-188 (PLGEEMRDRARAHVDALRTHLA), 189-210 (PYTDELRQRLAARLEALKENGG), and 211-232 (ARLAEYHAKASEHLSTLSEKAK). Met-136 carries the methionine sulfoxide modification. Residues 233 to 243 (PALEDLRQGLL) form a 9; half-length repeat. Residues 244 to 267 (PVLESFKVSFLSALEEYTKKLNTQ) form repeat 10.

It belongs to the apolipoprotein A1/A4/E family. In terms of assembly, homodimer. Interacts with APOA1BP and CLU. Component of a sperm activating protein complex (SPAP), consisting of APOA1, an immunoglobulin heavy chain, an immunoglobulin light chain and albumin. Interacts with NDRG1. Interacts with SCGB3A2. Interacts with NAXE and YJEFN3. In terms of processing, glycosylated. Post-translationally, palmitoylated. As to expression, major protein of plasma HDL, also found in chylomicrons.

Its subcellular location is the secreted. Its function is as follows. Participates in the reverse transport of cholesterol from tissues to the liver for excretion by promoting cholesterol efflux from tissues and by acting as a cofactor for the lecithin cholesterol acyltransferase (LCAT). As part of the SPAP complex, activates spermatozoa motility. The polypeptide is Apolipoprotein A-I (APOA1) (Pongo abelii (Sumatran orangutan)).